The following is a 304-amino-acid chain: UDP-3-O-acyl-N-acetylglucosamine deacetylase (304 aa).

The Zn(2+) site is built by histidine 78, histidine 235, and aspartate 239. The active-site Proton donor is histidine 262.

The protein belongs to the LpxC family. Zn(2+) serves as cofactor.

The catalysed reaction is a UDP-3-O-[(3R)-3-hydroxyacyl]-N-acetyl-alpha-D-glucosamine + H2O = a UDP-3-O-[(3R)-3-hydroxyacyl]-alpha-D-glucosamine + acetate. The protein operates within glycolipid biosynthesis; lipid IV(A) biosynthesis; lipid IV(A) from (3R)-3-hydroxytetradecanoyl-[acyl-carrier-protein] and UDP-N-acetyl-alpha-D-glucosamine: step 2/6. In terms of biological role, catalyzes the hydrolysis of UDP-3-O-myristoyl-N-acetylglucosamine to form UDP-3-O-myristoylglucosamine and acetate, the committed step in lipid A biosynthesis. In Anaeromyxobacter sp. (strain Fw109-5), this protein is UDP-3-O-acyl-N-acetylglucosamine deacetylase.